The following is a 502-amino-acid chain: MMRLKQLNEMSASEFIHLLGGVFENSSWVAERAEPNRPYSSFQSLYNKMVEIVETASDNEQLKLIQMHPHLGTNVKITDFSQEEQKHAGLNELTKDEQNHLILLNQKYKDKFGFPFVMAVRGKIKQEIFRTIKERLQNNHQTEFKQALEEIKKIAMFRLQEIFREGENNSMTKHKERVMYYGKGDVFAYRTYLKPLTGVRTIPESPFSGRDHILFGVNVKISVGGTKLLTSFTKGDNSLVVATDSMKNFIQKHLASYTGTTIEGFLEYVATSFLKKYSHIEKISLIGEEIPFETTFAVKNGNRAASELVFKKSRNEYATAYLNMVRNEDNTLNITEQQSGLAGLQLIKVSGNSFVGFIRDEYTTLPEDSNRPLFVYLNIKWKYKNTEDSFGTNPENYVAAEQIRDIATSVFHETETLSIQHLIYLIGRRILERFPQLQEVYFESQNHTWDKIVEEIPESEGKVYTEPRPPYGFQCFTVTQEDLPHENILMFSDEPDHKGALK.

The tract at residues 1 to 178 is OHCU decarboxylase; sequence MMRLKQLNEM…NSMTKHKERV (178 aa). Histidine 68 serves as the catalytic Proton donor; for OHCU decarboxylase activity. 5-hydroxy-2-oxo-4-ureido-2,5-dihydro-1H-imidazole-5-carboxylate contacts are provided by residues proline 69, 81–85, and 116–120; these read SQEEQ and FVMAV. Residues 179 to 502 are urate oxidase; the sequence is MYYGKGDVFA…DEPDHKGALK (324 aa). The Charge relay system; for urate oxidase activity role is filled by lysine 183. Lysine 194 acts as the Charge relay system in catalysis. Threonine 243 (charge relay system; for urate oxidase activity) is an active-site residue. Urate-binding residues include threonine 243, aspartate 244, phenylalanine 354, arginine 371, isoleucine 419, glutamine 420, and asparagine 446.

In the N-terminal section; belongs to the OHCU decarboxylase family. The protein in the C-terminal section; belongs to the uricase family.

The catalysed reaction is 5-hydroxy-2-oxo-4-ureido-2,5-dihydro-1H-imidazole-5-carboxylate + H(+) = (S)-allantoin + CO2. It carries out the reaction urate + O2 + H2O = 5-hydroxyisourate + H2O2. It participates in purine metabolism; urate degradation; (S)-allantoin from urate: step 1/3. Its pathway is purine metabolism; urate degradation; (S)-allantoin from urate: step 3/3. Functionally, catalyzes two steps in the degradation of uric acid, i.e. the oxidation of uric acid to 5-hydroxyisourate (HIU) and the stereoselective decarboxylation of 2-oxo-4-hydroxy-4-carboxy-5-ureidoimidazoline (OHCU) to (S)-allantoin. In Bacillus sp. (strain TB-90), this protein is Uric acid degradation bifunctional protein (uao).